A 732-amino-acid polypeptide reads, in one-letter code: DNA ligase (732 aa).

Residues 47-51 (DAEYD), 96-97 (SI), and glutamate 133 each bind NAD(+). The active-site N6-AMP-lysine intermediate is lysine 135. Residues arginine 156, glutamate 196, lysine 317, and lysine 341 each contribute to the NAD(+) site. Residues cysteine 470, cysteine 473, cysteine 488, and cysteine 494 each contribute to the Zn(2+) site. One can recognise a BRCT domain in the interval 653 to 732 (RATLPLAGKT…AGMLALLQGR (80 aa)).

Belongs to the NAD-dependent DNA ligase family. LigA subfamily. It depends on Mg(2+) as a cofactor. Mn(2+) is required as a cofactor.

The catalysed reaction is NAD(+) + (deoxyribonucleotide)n-3'-hydroxyl + 5'-phospho-(deoxyribonucleotide)m = (deoxyribonucleotide)n+m + AMP + beta-nicotinamide D-nucleotide.. DNA ligase that catalyzes the formation of phosphodiester linkages between 5'-phosphoryl and 3'-hydroxyl groups in double-stranded DNA using NAD as a coenzyme and as the energy source for the reaction. It is essential for DNA replication and repair of damaged DNA. The polypeptide is DNA ligase (Paracidovorax citrulli (strain AAC00-1) (Acidovorax citrulli)).